The following is a 440-amino-acid chain: Oligodendrocyte-myelin glycoprotein (440 aa).

The first 24 residues, methionine 1 to cysteine 24, serve as a signal peptide directing secretion. The region spanning isoleucine 25–glutamate 55 is the LRRNT domain. 2 N-linked (GlcNAc...) asparagine glycosylation sites follow: asparagine 45 and asparagine 61. 8 LRR repeats span residues asparagine 56–threonine 78, asparagine 79–serine 100, leucine 101–tyrosine 121, asparagine 124–leucine 145, serine 147–lysine 168, leucine 169–asparagine 189, asparagine 192–glutamine 213, and glutamine 216–leucine 239. A glycan (N-linked (GlcNAc...) asparagine) is linked at asparagine 103. 5 N-linked (GlcNAc...) asparagine glycosylation sites follow: asparagine 152, asparagine 176, asparagine 189, asparagine 192, and asparagine 234. 5 Ser/Thr-rich repeats span residues cysteine 229–proline 270, proline 271–leucine 292, serine 293–proline 335, glutamate 336–proline 377, and valine 378–proline 416. Asparagine 364 and asparagine 389 each carry an N-linked (GlcNAc...) asparagine glycan. The GPI-anchor amidated serine moiety is linked to residue serine 417. A propeptide spans alanine 418–glycine 440 (removed in mature form). Asparagine 425 carries N-linked (GlcNAc...) asparagine glycosylation.

Binds to RTN4R. Post-translationally, O-glycosylated in its Ser/Thr-rich repeat domain. In terms of tissue distribution, oligodendrocytes and myelin of the central nervous system.

The protein localises to the cell membrane. Functionally, cell adhesion molecule contributing to the interactive process required for myelination in the central nervous system. The sequence is that of Oligodendrocyte-myelin glycoprotein (Omg) from Mus musculus (Mouse).